The sequence spans 204 residues: Holliday junction resolvase RecU (204 aa).

Mg(2+) contacts are provided by Thr-89, Asp-91, Asp-104, and Gln-123.

Belongs to the RecU family. Mg(2+) serves as cofactor.

Its subcellular location is the cytoplasm. It carries out the reaction Endonucleolytic cleavage at a junction such as a reciprocal single-stranded crossover between two homologous DNA duplexes (Holliday junction).. Its function is as follows. Endonuclease that resolves Holliday junction intermediates in genetic recombination. Cleaves mobile four-strand junctions by introducing symmetrical nicks in paired strands. Promotes annealing of linear ssDNA with homologous dsDNA. Required for DNA repair, homologous recombination and chromosome segregation. In Leuconostoc mesenteroides subsp. mesenteroides (strain ATCC 8293 / DSM 20343 / BCRC 11652 / CCM 1803 / JCM 6124 / NCDO 523 / NBRC 100496 / NCIMB 8023 / NCTC 12954 / NRRL B-1118 / 37Y), this protein is Holliday junction resolvase RecU.